We begin with the raw amino-acid sequence, 932 residues long: Isoleucine--tRNA ligase (932 aa).

The short motif at 58 to 68 (PYANGNLHLGH) is the 'HIGH' region element. L-isoleucyl-5'-AMP is bound at residue Glu567. Positions 608–612 (KMSKS) match the 'KMSKS' region motif. Lys611 serves as a coordination point for ATP. The Zn(2+) site is built by Cys895, Cys898, Cys915, and Cys918.

This sequence belongs to the class-I aminoacyl-tRNA synthetase family. IleS type 1 subfamily. In terms of assembly, monomer. Zn(2+) serves as cofactor.

The protein resides in the cytoplasm. The catalysed reaction is tRNA(Ile) + L-isoleucine + ATP = L-isoleucyl-tRNA(Ile) + AMP + diphosphate. In terms of biological role, catalyzes the attachment of isoleucine to tRNA(Ile). As IleRS can inadvertently accommodate and process structurally similar amino acids such as valine, to avoid such errors it has two additional distinct tRNA(Ile)-dependent editing activities. One activity is designated as 'pretransfer' editing and involves the hydrolysis of activated Val-AMP. The other activity is designated 'posttransfer' editing and involves deacylation of mischarged Val-tRNA(Ile). This is Isoleucine--tRNA ligase from Azoarcus sp. (strain BH72).